A 386-amino-acid chain; its full sequence is Oxysterol-binding protein-related protein 4A (386 aa).

It belongs to the OSBP family. Expressed in roots, stems and flowers.

Its function is as follows. May be involved in the transport of sterols. This chain is Oxysterol-binding protein-related protein 4A (ORP4A), found in Arabidopsis thaliana (Mouse-ear cress).